The following is a 176-amino-acid chain: NAD(P)H-quinone oxidoreductase subunit J (176 aa).

The segment covering 1–10 (MSETPTSPNQ) has biased composition (polar residues). Residues 1-22 (MSETPTSPNQDLPEAPQAGPLS) form a disordered region.

It belongs to the complex I 30 kDa subunit family. NDH-1 can be composed of about 15 different subunits; different subcomplexes with different compositions have been identified which probably have different functions.

The protein localises to the cellular thylakoid membrane. It carries out the reaction a plastoquinone + NADH + (n+1) H(+)(in) = a plastoquinol + NAD(+) + n H(+)(out). It catalyses the reaction a plastoquinone + NADPH + (n+1) H(+)(in) = a plastoquinol + NADP(+) + n H(+)(out). Functionally, NDH-1 shuttles electrons from an unknown electron donor, via FMN and iron-sulfur (Fe-S) centers, to quinones in the respiratory and/or the photosynthetic chain. The immediate electron acceptor for the enzyme in this species is believed to be plastoquinone. Couples the redox reaction to proton translocation, and thus conserves the redox energy in a proton gradient. Cyanobacterial NDH-1 also plays a role in inorganic carbon-concentration. The protein is NAD(P)H-quinone oxidoreductase subunit J of Synechococcus sp. (strain RCC307).